Here is a 114-residue protein sequence, read N- to C-terminus: Probable acid stress chaperone HdeA (114 aa).

A signal peptide spans 1 to 26 (MIKALFNKNTALAAVAILALSGGAMA). Cys-46 and Cys-94 form a disulfide bridge.

It belongs to the HdeA family.

The protein localises to the periplasm. Required for optimal acid stress protection. Exhibits a chaperone-like activity only at low pH by suppressing non-specifically the aggregation of denaturated periplasmic proteins. Contributes to acid resistance. Not required for wild-type virulence in the BALB/c mouse model. The polypeptide is Probable acid stress chaperone HdeA (Brucella abortus (strain 2308)).